We begin with the raw amino-acid sequence, 150 residues long: Transcriptional repressor NrdR (150 aa).

The segment at 3–34 is a zinc-finger region; the sequence is CPFCQHDHSKVIDSRVIDAGSAIRRRRECSKC. The region spanning 46–136 is the ATP-cone domain; it reads LLVVKRNGVT…VYKSFDSADD (91 aa).

Belongs to the NrdR family. Zn(2+) is required as a cofactor.

In terms of biological role, negatively regulates transcription of bacterial ribonucleotide reductase nrd genes and operons by binding to NrdR-boxes. This chain is Transcriptional repressor NrdR, found in Corynebacterium glutamicum (strain ATCC 13032 / DSM 20300 / JCM 1318 / BCRC 11384 / CCUG 27702 / LMG 3730 / NBRC 12168 / NCIMB 10025 / NRRL B-2784 / 534).